Here is a 398-residue protein sequence, read N- to C-terminus: Elongation factor Tu (398 aa).

One can recognise a tr-type G domain in the interval 10 to 207; the sequence is KPHVNIGTIG…TVDDYIPDPE (198 aa). A G1 region spans residues 19–26; the sequence is GHVDHGKT. Residue 19–26 coordinates GTP; it reads GHVDHGKT. Mg(2+) is bound at residue threonine 26. The segment at 63-67 is G2; that stretch reads GITIN. The interval 84 to 87 is G3; it reads DAPG. GTP-binding positions include 84–88 and 139–142; these read DAPGH and NKVD. Residues 139-142 form a G4 region; sequence NKVD. The G5 stretch occupies residues 177 to 179; that stretch reads SAL.

This sequence belongs to the TRAFAC class translation factor GTPase superfamily. Classic translation factor GTPase family. EF-Tu/EF-1A subfamily. Monomer.

Its subcellular location is the cytoplasm. The enzyme catalyses GTP + H2O = GDP + phosphate + H(+). GTP hydrolase that promotes the GTP-dependent binding of aminoacyl-tRNA to the A-site of ribosomes during protein biosynthesis. The protein is Elongation factor Tu of Streptococcus mutans serotype c (strain ATCC 700610 / UA159).